A 650-amino-acid chain; its full sequence is Exonuclease 3'-5' domain-containing protein 2 (650 aa).

Over 1-6 (MSRQNL) the chain is Mitochondrial intermembrane. A helical transmembrane segment spans residues 7–29 (VALTVTTLLGVAMGGFVLWKGIQ). Residues 30 to 650 (RRWSKTSRVM…YGDDLPIKLS (621 aa)) lie on the Cytoplasmic side of the membrane. Residues 34 to 89 (KTSRVMQQQPQQPQQPQQPQPQPQPQPQPQPEHPQPQQQVPGGREWPPPEDDQLPF) form a disordered region. The span at 49–67 (PQQPQPQPQPQPQPQPEHP) shows a compositional bias: pro residues. Asp137, Glu139, and Asp275 together coordinate a divalent metal cation. Residues 184 to 276 (ILADGAILKV…DQVTYAARDA (93 aa)) form the 3'-5' exonuclease domain. The interval 340–373 (SQLKPRNRKAKTDRMVPGNNQGRDPRKHKRKPLG) is disordered.

Belongs to the EXD2 family. As to quaternary structure, homodimer. Interacts with RBBP8, MRE11 and BRCA1. The cofactor is Mg(2+). Mn(2+) serves as cofactor.

It is found in the mitochondrion outer membrane. The protein localises to the mitochondrion matrix. The protein resides in the nucleus. It localises to the chromosome. It catalyses the reaction Exonucleolytic cleavage in the 3'- to 5'-direction to yield nucleoside 5'-phosphates.. Its function is as follows. Exonuclease that has both 3'-5' exoribonuclease and exodeoxyribonuclease activities, depending on the divalent metal cation used as cofactor. In presence of Mg(2+), only shows 3'-5' exoribonuclease activity, while it shows both exoribonuclease and exodeoxyribonuclease activities in presence of Mn(2+). Acts as an exoribonuclease in mitochondrion, possibly by regulating ATP production and mitochondrial translation. Also involved in the response to DNA damage. Acts as 3'-5' exodeoxyribonuclease for double-strand breaks resection and efficient homologous recombination. Plays a key role in controlling the initial steps of chromosomal break repair, it is recruited to chromatin in a damage-dependent manner and functionally interacts with the MRN complex to accelerate resection through its 3'-5' exonuclease activity, which efficiently processes double-stranded DNA substrates containing nicks. Also involved in response to replicative stress: recruited to stalled forks and is required to stabilize and restart stalled replication forks by restraining excessive fork regression, thereby suppressing their degradation. In Mus musculus (Mouse), this protein is Exonuclease 3'-5' domain-containing protein 2.